Reading from the N-terminus, the 201-residue chain is MIALIDYKAGNLNSVAKAFEKIGAINFIAKNPKDLQKADKLLLPGVGSFKEAMKNLKELGFIEALKEQVLVQKKPILGICLGMQLFLERGYEGGVCEGLGFIEGEVVKFEEDLNLKIPHMGWNELEILKQVPLYQGIDNKSDFYFVHSFYVKCKDEFVSAKAQYGHKFVASLQKDHIFATQFHPEKSQNLGLKLLENFIRL.

The Glutamine amidotransferase type-1 domain occupies 1–201 (MIALIDYKAG…LKLLENFIRL (201 aa)). The active-site Nucleophile is Cys80. Active-site residues include His183 and Glu185.

In terms of assembly, heterodimer of HisH and HisF.

It localises to the cytoplasm. It catalyses the reaction 5-[(5-phospho-1-deoxy-D-ribulos-1-ylimino)methylamino]-1-(5-phospho-beta-D-ribosyl)imidazole-4-carboxamide + L-glutamine = D-erythro-1-(imidazol-4-yl)glycerol 3-phosphate + 5-amino-1-(5-phospho-beta-D-ribosyl)imidazole-4-carboxamide + L-glutamate + H(+). It carries out the reaction L-glutamine + H2O = L-glutamate + NH4(+). Its pathway is amino-acid biosynthesis; L-histidine biosynthesis; L-histidine from 5-phospho-alpha-D-ribose 1-diphosphate: step 5/9. IGPS catalyzes the conversion of PRFAR and glutamine to IGP, AICAR and glutamate. The HisH subunit provides the glutamine amidotransferase activity that produces the ammonia necessary to HisF for the synthesis of IGP and AICAR. The chain is Imidazole glycerol phosphate synthase subunit HisH 1 from Campylobacter jejuni (strain RM1221).